A 294-amino-acid polypeptide reads, in one-letter code: MLELLLQPFNYNYMVKAIWVSAIVGAVCAFLSAYLMLKGWSLMGDALSHSVVPGVAGAYALGFPYAAGAFFTGMLAALAMTLVRHITRLREDAIIGFIFSTFFAVGLLIVSLNPTSVNVQSIIFGNILGIADEDVLQVEIIILVSFVILCLIWKDLLAVFFDESHAMSIGLSPLRLKILFFTLLSACTVAALQTVGAILVIAMVVTPGATAYLLTDRFGRLLIIAIAIGAITSAFGAYLSFYLDGATGGVIVTLQTLVFLPAFFFAPKHGLLATRYRTRLKRRHPPVHLPEDNL.

Helical transmembrane passes span 17–37 (AIWVSAIVGAVCAFLSAYLML), 51–71 (VVPGVAGAYALGFPYAAGAFF), 93–113 (AIIGFIFSTFFAVGLLIVSLN), 140–160 (IIILVSFVILCLIWKDLLAVF), 169–189 (IGLSPLRLKILFFTLLSACTV), 194–214 (TVGAILVIAMVVTPGATAYLL), 221–241 (LLIIAIAIGAITSAFGAYLSF), and 246–266 (ATGGVIVTLQTLVFLPAFFFA).

The protein belongs to the ABC-3 integral membrane protein family.

The protein localises to the cell inner membrane. Part of an ATP-driven transport system YfeABC for chelated iron. This chain is Chelated iron transport system membrane protein YfeC (yfeC), found in Yersinia pestis.